The primary structure comprises 362 residues: S-adenosylmethionine-dependent nucleotide dehydratase RSAD2 (362 aa).

A disordered region spans residues glutamate 47 to proline 73. The span at aspartate 64 to proline 73 shows a compositional bias: polar residues. One can recognise a Radical SAM core domain in the interval proline 70 to leucine 290. [4Fe-4S] cluster is bound by residues cysteine 84, cysteine 88, and cysteine 91. At lysine 198 the chain carries N6-acetyllysine. Residue lysine 207 forms a Glycyl lysine isopeptide (Lys-Gly) (interchain with G-Cter in ubiquitin) linkage.

It belongs to the radical SAM superfamily. RSAD2 family. In terms of assembly, homodimer. Interacts with IRAK1 and TRAF6. Interacts with FPPS. Interacts with HADHB. Interacts (via C-terminus) with VAPA/VAP33 (via C-terminus). The cofactor is [4Fe-4S] cluster. Acetylated by HAT1. HAT1-mediated acetylation of Lys-198 in turn recruits UBE4A that stimulates RSAD2 polyubiquitination leading to proteasomal degradation. In terms of processing, 'Lys-6'-linked polyubiquitination at Lys-207 leads to RSAD2 protein degradation. As to expression, expressed at higher levels in atherosclerotic arteries than in normal arteries.

It localises to the endoplasmic reticulum membrane. Its subcellular location is the golgi apparatus. The protein resides in the endoplasmic reticulum. The protein localises to the lipid droplet. It is found in the mitochondrion. It localises to the mitochondrion inner membrane. Its subcellular location is the mitochondrion outer membrane. It carries out the reaction CTP + AH2 + S-adenosyl-L-methionine = 3'-deoxy-3',4'-didehydro-CTP + 5'-deoxyadenosine + L-methionine + A + H2O + H(+). With respect to regulation, IRAK1 and TRAF6 synergistically activate RSAD2 increasing its activity with CTP as substrate about 10-fold. Its function is as follows. Interferon-inducible antiviral protein which plays a major role in the cell antiviral state induced by type I and type II interferon. Catalyzes the conversion of cytidine triphosphate (CTP) to 3'-deoxy-3',4'-didehydro-CTP (ddhCTP) via a SAM-dependent radical mechanism. In turn, ddhCTP acts as a chain terminator for the RNA-dependent RNA polymerases from multiple viruses and directly inhibits viral replication. Therefore, inhibits a wide range of DNA and RNA viruses. Also promotes TLR7 and TLR9-dependent production of IFN-beta production in plasmacytoid dendritic cells (pDCs) by facilitating 'Lys-63'-linked ubiquitination of IRAK1 by TRAF6. Plays a role in CD4+ T-cells activation and differentiation. Facilitates T-cell receptor (TCR)-mediated GATA3 activation and optimal T-helper 2 (Th2) cytokine production by modulating NFKB1 and JUNB activities. Can inhibit secretion of soluble proteins. The chain is S-adenosylmethionine-dependent nucleotide dehydratase RSAD2 from Mus musculus (Mouse).